Consider the following 142-residue polypeptide: Hemoglobin subunit alpha-2 (142 aa).

In terms of domain architecture, Globin spans 2–142; sequence VLSAADKSNI…VSTVLTSKYR (141 aa). His59 serves as a coordination point for O2. His88 contacts heme b.

It belongs to the globin family. Heterotetramer of two alpha chains and two beta chains. Red blood cells.

In terms of biological role, involved in oxygen transport from the lung to the various peripheral tissues. The chain is Hemoglobin subunit alpha-2 from Bubalus bubalis (Domestic water buffalo).